The following is a 560-amino-acid chain: DNA ligase B (560 aa).

Lysine 128 (N6-AMP-lysine intermediate) is an active-site residue.

The protein belongs to the NAD-dependent DNA ligase family. LigB subfamily.

It catalyses the reaction NAD(+) + (deoxyribonucleotide)n-3'-hydroxyl + 5'-phospho-(deoxyribonucleotide)m = (deoxyribonucleotide)n+m + AMP + beta-nicotinamide D-nucleotide.. Functionally, catalyzes the formation of phosphodiester linkages between 5'-phosphoryl and 3'-hydroxyl groups in double-stranded DNA using NAD as a coenzyme and as the energy source for the reaction. This is DNA ligase B from Azotobacter vinelandii (strain DJ / ATCC BAA-1303).